Reading from the N-terminus, the 830-residue chain is Leucine--tRNA ligase (830 aa).

The 'HIGH' region signature appears at Pro-48–His-58. The 'KMSKS' region motif lies at Lys-596–Ser-600. Residue Lys-599 coordinates ATP.

This sequence belongs to the class-I aminoacyl-tRNA synthetase family.

It localises to the cytoplasm. It catalyses the reaction tRNA(Leu) + L-leucine + ATP = L-leucyl-tRNA(Leu) + AMP + diphosphate. This Helicobacter hepaticus (strain ATCC 51449 / 3B1) protein is Leucine--tRNA ligase.